The chain runs to 365 residues: Dehydroprecondylocarpine acetate synthase (365 aa).

4 residues coordinate Zn(2+): C105, C108, C111, and C119. N-linked (GlcNAc...) asparagine glycans are attached at residues N142 and N147. Positions 194, 196, 197, 216, 217, 218, 221, 279, 281, 303, 305, and 350 each coordinate NADP(+).

This sequence belongs to the zinc-containing alcohol dehydrogenase family. Homodimer. Interaction with catharanthine synthase (CS) and tabersonine synthase (TS). Zn(2+) serves as cofactor.

The protein resides in the cytoplasm. It localises to the cytosol. The enzyme catalyses dihydroprecondylocarpine acetate + NADP(+) = precondylocarpine acetate + NADPH + H(+). Its pathway is alkaloid biosynthesis. Functionally, component of the seco-iridoid and derivatives monoterpenoid indole alkaloids (MIAs, e.g. vinblastine, catharanthine, tabersonine, vincadifformine, vindoline, vincristine, quinine and strychnine) biosynthesis pathway. Catalyzes the non-canonical 1,4-reduction of an alpha,beta-unsaturated iminium moiety; by contrast with the classic alcohol dehydrogenase mechanism, this reaction does not require a catalytic zinc or proton relay. Converts precondylocarpine acetate to dihydroprecondylocarpine acetate, that is spontaneously converted into dehydrosecodine intermediate, precursor of angryline. May also trigger the non-stereoselective 1,4-reduction reaction at C15 of dehydrosecodine leading to the production of secodine, a precursor of vincadifformine. The polypeptide is Dehydroprecondylocarpine acetate synthase (Catharanthus roseus (Madagascar periwinkle)).